The chain runs to 310 residues: Probable mitochondrial import receptor subunit TOM40-2 (310 aa).

Met1 carries the post-translational modification N-acetylmethionine.

It belongs to the Tom40 family. As to quaternary structure, forms part of the preprotein translocase complex of the outer mitochondrial membrane (TOM complex) which consists of at least 6 different proteins (TOM5, TOM6, TOM7, TOM20, TOM22/TOM9 and TOM40). Present in a large lipid-enriched complex called mitochondrial transmembrane lipoprotein (MTL) complex made of proteins located in the two mitochondrial membranes, including the TOM complex and the core components of the MICOS complex and containing at least digalactosyldiacylglycerol (DGDG). Binds to MIC60. Component of a mitochondrial large protein complex that contains, at least, MIC60, DGS1, TOM40, TOM20 proteins, and petC/RISP. As to expression, expressed in roots, flowers, young cotyledons and leaves.

The protein resides in the mitochondrion outer membrane. Its function is as follows. Central component of the receptor complex responsible for the recognition and translocation of cytosolically synthesized mitochondrial preproteins. Together with TOM22 functions as the transit peptide receptor at the surface of the mitochondrion outer membrane and facilitates the movement of preproteins into the translocation pore. Directly involved in the pore formation. In Arabidopsis thaliana (Mouse-ear cress), this protein is Probable mitochondrial import receptor subunit TOM40-2.